Consider the following 198-residue polypeptide: FMN-dependent NADH:quinone oxidoreductase (198 aa).

Position 92–95 (92–95 (MWNL)) interacts with FMN.

The protein belongs to the azoreductase type 1 family. In terms of assembly, homodimer. The cofactor is FMN.

It carries out the reaction 2 a quinone + NADH + H(+) = 2 a 1,4-benzosemiquinone + NAD(+). The enzyme catalyses N,N-dimethyl-1,4-phenylenediamine + anthranilate + 2 NAD(+) = 2-(4-dimethylaminophenyl)diazenylbenzoate + 2 NADH + 2 H(+). Its function is as follows. Quinone reductase that provides resistance to thiol-specific stress caused by electrophilic quinones. Also exhibits azoreductase activity. Catalyzes the reductive cleavage of the azo bond in aromatic azo compounds to the corresponding amines. The polypeptide is FMN-dependent NADH:quinone oxidoreductase (Lachnoclostridium phytofermentans (strain ATCC 700394 / DSM 18823 / ISDg) (Clostridium phytofermentans)).